The following is a 505-amino-acid chain: Putative heat shock protein HSP 90-beta 4 (505 aa).

Positions 22, 83, and 109 each coordinate ATP. The interval 197–248 is disordered; that stretch reads EKEISDDEEEKGEKEEEDKDDKEKPKTEDVGSDEEDDTDKNNKKKTKKIKEK. Residues 200 to 216 are compositionally biased toward acidic residues; that stretch reads ISDDEEEKGEKEEEDKD.

This sequence belongs to the heat shock protein 90 family. Homodimer.

The protein localises to the cytoplasm. Its function is as follows. Putative molecular chaperone that may promote the maturation, structural maintenance and proper regulation of specific target proteins. This Homo sapiens (Human) protein is Putative heat shock protein HSP 90-beta 4 (HSP90AB4P).